Reading from the N-terminus, the 107-residue chain is Iron-sulfur cluster assembly protein CyaY (107 aa).

It belongs to the frataxin family.

Involved in iron-sulfur (Fe-S) cluster assembly. May act as a regulator of Fe-S biogenesis. The protein is Iron-sulfur cluster assembly protein CyaY of Enterobacter sp. (strain 638).